Consider the following 212-residue polypeptide: Ras-related protein Rab-15 (212 aa).

Positions 17, 18, 19, 20, 21, 22, 23, 35, 39, and 40 each coordinate GTP. T22 is a Mg(2+) binding site. Short sequence motifs (switch) lie at residues 31 to 45 (NEFH…GVDF) and 63 to 80 (DTAG…YYRR). 2 residues coordinate Mg(2+): T40 and D63. 6 residues coordinate GTP: G66, N121, K122, D124, S151, and A152. The tract at residues 192–212 (ELEEDEGKPEGPANSSKTCWC) is disordered. Residues C210 and C212 are each lipidated (S-geranylgeranyl cysteine). Residue C212 is modified to Cysteine methyl ester.

Belongs to the small GTPase superfamily. Rab family. The GTP bound form of RAB15 interacts with REP15. Interacts (GTP-bound form) with MICAL1, MICAL3, MICALCL, EHBP1 and EHBP1L1. Mg(2+) serves as cofactor.

It localises to the cell membrane. The enzyme catalyses GTP + H2O = GDP + phosphate + H(+). Its activity is regulated as follows. Regulated by guanine nucleotide exchange factors (GEFs) which promote the exchange of bound GDP for free GTP. Regulated by GTPase activating proteins (GAPs) which increase the GTP hydrolysis activity. Inhibited by GDP dissociation inhibitors (GDIs). Its function is as follows. The small GTPases Rab are key regulators of intracellular membrane trafficking, from the formation of transport vesicles to their fusion with membranes. Rabs cycle between an inactive GDP-bound form and an active GTP-bound form that is able to recruit to membranes different sets of downstream effectors directly responsible for vesicle formation, movement, tethering and fusion. RAB15 may act in concert with RAB3A in regulating aspects of synaptic vesicle membrane flow within the nerve terminal. In Bos taurus (Bovine), this protein is Ras-related protein Rab-15 (RAB15).